Here is a 434-residue protein sequence, read N- to C-terminus: Ribosomal protein uS12 methylthiotransferase RimO (434 aa).

An MTTase N-terminal domain is found at 1–107 (MHLGCEKNLV…ILNVLQRIEQ (107 aa)). Residues C5, C41, C70, C145, C149, and C152 each contribute to the [4Fe-4S] cluster site. The region spanning 131 to 360 (TTGKAVAYLK…ISIQQPIAEL (230 aa)) is the Radical SAM core domain. Residues 363 to 434 (QNWIGRTVDV…DLYDLTGQVV (72 aa)) form the TRAM domain.

It belongs to the methylthiotransferase family. RimO subfamily. [4Fe-4S] cluster is required as a cofactor.

Its subcellular location is the cytoplasm. The enzyme catalyses L-aspartate(89)-[ribosomal protein uS12]-hydrogen + (sulfur carrier)-SH + AH2 + 2 S-adenosyl-L-methionine = 3-methylsulfanyl-L-aspartate(89)-[ribosomal protein uS12]-hydrogen + (sulfur carrier)-H + 5'-deoxyadenosine + L-methionine + A + S-adenosyl-L-homocysteine + 2 H(+). Functionally, catalyzes the methylthiolation of an aspartic acid residue of ribosomal protein uS12. The polypeptide is Ribosomal protein uS12 methylthiotransferase RimO (Prochlorococcus marinus (strain SARG / CCMP1375 / SS120)).